A 190-amino-acid polypeptide reads, in one-letter code: Segregation and condensation protein B (190 aa).

It belongs to the ScpB family. In terms of assembly, homodimer. Homodimerization may be required to stabilize the binding of ScpA to the Smc head domains. Component of a cohesin-like complex composed of ScpA, ScpB and the Smc homodimer, in which ScpA and ScpB bind to the head domain of Smc. The presence of the three proteins is required for the association of the complex with DNA.

Its subcellular location is the cytoplasm. In terms of biological role, participates in chromosomal partition during cell division. May act via the formation of a condensin-like complex containing Smc and ScpA that pull DNA away from mid-cell into both cell halves. This chain is Segregation and condensation protein B, found in Bacillus cereus (strain AH187).